Reading from the N-terminus, the 265-residue chain is NAD kinase (265 aa).

Asp45 serves as the catalytic Proton acceptor. Residues Asp45–Gly46, Asn122–Glu123, Arg148, Asp150, Thr161–Ser166, Ala185, and Gln223 each bind NAD(+).

Belongs to the NAD kinase family. The cofactor is a divalent metal cation.

It is found in the cytoplasm. The enzyme catalyses NAD(+) + ATP = ADP + NADP(+) + H(+). In terms of biological role, involved in the regulation of the intracellular balance of NAD and NADP, and is a key enzyme in the biosynthesis of NADP. Catalyzes specifically the phosphorylation on 2'-hydroxyl of the adenosine moiety of NAD to yield NADP. The chain is NAD kinase from Enterococcus faecalis (strain ATCC 700802 / V583).